Here is a 416-residue protein sequence, read N- to C-terminus: Tryptophan synthase beta chain (416 aa).

N6-(pyridoxal phosphate)lysine is present on Lys-109.

It belongs to the TrpB family. As to quaternary structure, tetramer of two alpha and two beta chains. It depends on pyridoxal 5'-phosphate as a cofactor.

The enzyme catalyses (1S,2R)-1-C-(indol-3-yl)glycerol 3-phosphate + L-serine = D-glyceraldehyde 3-phosphate + L-tryptophan + H2O. The protein operates within amino-acid biosynthesis; L-tryptophan biosynthesis; L-tryptophan from chorismate: step 5/5. The beta subunit is responsible for the synthesis of L-tryptophan from indole and L-serine. This chain is Tryptophan synthase beta chain, found in Mesorhizobium japonicum (strain LMG 29417 / CECT 9101 / MAFF 303099) (Mesorhizobium loti (strain MAFF 303099)).